Consider the following 621-residue polypeptide: Probable potassium transport system protein Kup 2 (621 aa).

Helical transmembrane passes span 9–29 (MAGLTLAALGVVYGDIGTSPL), 48–68 (IFGILSLIFWSLIFVVSVKYV), 101–121 (IVLLGLFGAALFYGDAIITPA), 136–156 (SGMEAYVLPMAVGVLVGLFLL), 164–184 (VGLMFGPVMMVWFAILGILGL), 210–230 (GFHAFLTLGSVVLALTGAEAL), 246–266 (WFSLVLPGLGLNYFGQGALLM), 275–295 (PFFLLAPDWALLPMIALATLA), 336–356 (IYMPFINWALLVAVLVVVLTF), 364–384 (AAYGIAVTGTMLITTMLFFVV), 393–413 (LPLALGITLLFGVIDTAFFAA), and 418–438 (VADGGWLPLVMGMAIFTLMST).

Belongs to the HAK/KUP transporter (TC 2.A.72) family.

Its subcellular location is the cell inner membrane. The catalysed reaction is K(+)(in) + H(+)(in) = K(+)(out) + H(+)(out). Functionally, transport of potassium into the cell. Likely operates as a K(+):H(+) symporter. This chain is Probable potassium transport system protein Kup 2, found in Chromobacterium violaceum (strain ATCC 12472 / DSM 30191 / JCM 1249 / CCUG 213 / NBRC 12614 / NCIMB 9131 / NCTC 9757 / MK).